The sequence spans 135 residues: Phosphoribosyl-AMP cyclohydrolase (135 aa).

D89 provides a ligand contact to Mg(2+). Residue C90 participates in Zn(2+) binding. Mg(2+) contacts are provided by D91 and D93. Zn(2+) contacts are provided by C106 and C113.

This sequence belongs to the PRA-CH family. In terms of assembly, homodimer. Mg(2+) is required as a cofactor. It depends on Zn(2+) as a cofactor.

The protein resides in the cytoplasm. The catalysed reaction is 1-(5-phospho-beta-D-ribosyl)-5'-AMP + H2O = 1-(5-phospho-beta-D-ribosyl)-5-[(5-phospho-beta-D-ribosylamino)methylideneamino]imidazole-4-carboxamide. Its pathway is amino-acid biosynthesis; L-histidine biosynthesis; L-histidine from 5-phospho-alpha-D-ribose 1-diphosphate: step 3/9. Its function is as follows. Catalyzes the hydrolysis of the adenine ring of phosphoribosyl-AMP. The sequence is that of Phosphoribosyl-AMP cyclohydrolase from Bifidobacterium adolescentis (strain ATCC 15703 / DSM 20083 / NCTC 11814 / E194a).